A 291-amino-acid polypeptide reads, in one-letter code: RPE-retinal G protein-coupled receptor (291 aa).

The Extracellular segment spans residues 1 to 15; the sequence is MAATRALPAGLGELE. The chain crosses the membrane as a helical span at residues 16–36; the sequence is VLAVGTVLLMEALSGISLNGL. Residues 37 to 52 lie on the Cytoplasmic side of the membrane; it reads TIFSFCKTPDLRTPSN. A helical membrane pass occupies residues 53 to 73; that stretch reads LLVLSLALADTGISLNALVAA. Residues 74–91 are Extracellular-facing; that stretch reads VSSLLRRWPHGSEGCQVH. Cysteines 88 and 162 form a disulfide. The chain crosses the membrane as a helical span at residues 92 to 112; that stretch reads GFQGFATALASICGSAAVAWG. The Cytoplasmic portion of the chain corresponds to 113 to 130; the sequence is RYHHYCTRRQLAWDTAIP. Residues 131–151 form a helical membrane-spanning segment; it reads LVLFVWMSSAFWASLPLMGWG. Residues 152–175 are Extracellular-facing; it reads HYDYEPVGTCCTLDYSRGDRNFIS. Residues 176–196 traverse the membrane as a helical segment; sequence FLFTMAFFNFLVPLFITHTSY. The Cytoplasmic portion of the chain corresponds to 197-219; the sequence is RFMEQKFSRSGHLPVNTTLPGRM. The chain crosses the membrane as a helical span at residues 220–240; it reads LLLGWGPYALLYLYAAIADVS. Topologically, residues 241–247 are extracellular; sequence FISPKLQ. Residues 248 to 268 form a helical membrane-spanning segment; sequence MVPALIAKTMPTINAINYALH. Lys-255 is modified (N6-(retinylidene)lysine). Topologically, residues 269-291 are cytoplasmic; it reads REMVCRGTWQCLSPQKSKKDRTQ.

It belongs to the G-protein coupled receptor 1 family. Opsin subfamily. Post-translationally, covalently binds all-trans- and 11-cis-retinal.

The protein localises to the membrane. Its function is as follows. Receptor for all-trans- and 11-cis-retinal. Binds preferentially to the former and may catalyze the isomerization of the chromophore by a retinochrome-like mechanism. The chain is RPE-retinal G protein-coupled receptor (Rgr) from Mus musculus (Mouse).